The following is a 151-amino-acid chain: Methylglyoxal synthase (151 aa).

Positions 6 to 151 (RTMPAHKHVA…DYDAYLAERT (146 aa)) constitute an MGS-like domain. Substrate contacts are provided by residues H19, K23, 45–48 (TGTT), and 65–66 (SG). Residue D71 is the Proton donor/acceptor of the active site. Position 98 (H98) interacts with substrate.

Belongs to the methylglyoxal synthase family.

The catalysed reaction is dihydroxyacetone phosphate = methylglyoxal + phosphate. Catalyzes the formation of methylglyoxal from dihydroxyacetone phosphate. This is Methylglyoxal synthase from Vibrio campbellii (strain ATCC BAA-1116).